A 387-amino-acid polypeptide reads, in one-letter code: Phosphoglycerate kinase (387 aa).

Substrate contacts are provided by residues 21 to 23 (DLN), Arg36, 59 to 62 (HLGR), Arg113, and Arg146. Residues Lys197, Glu314, and 340–343 (GGDT) contribute to the ATP site.

Belongs to the phosphoglycerate kinase family. As to quaternary structure, monomer.

Its subcellular location is the cytoplasm. It catalyses the reaction (2R)-3-phosphoglycerate + ATP = (2R)-3-phospho-glyceroyl phosphate + ADP. The protein operates within carbohydrate degradation; glycolysis; pyruvate from D-glyceraldehyde 3-phosphate: step 2/5. This chain is Phosphoglycerate kinase, found in Marinomonas sp. (strain MWYL1).